Reading from the N-terminus, the 407-residue chain is Putative nickel insertion protein (407 aa).

It belongs to the LarC family.

The polypeptide is Putative nickel insertion protein (Gloeothece citriformis (strain PCC 7424) (Cyanothece sp. (strain PCC 7424))).